Consider the following 331-residue polypeptide: Vitamin B12 import system permease protein BtuC (331 aa).

A run of 9 helical transmembrane segments spans residues 20-42 (VMLA…FLSP), 62-84 (LVAA…VLLG), 91-113 (GVLG…LPVM), 117-136 (TVFM…ILVG), 148-170 (MLLV…FYFS), 190-209 (SWHH…WLCL), 240-262 (LAIS…VGLV), 277-296 (FLLP…SDIW), and 303-325 (SAEL…WMLI).

This sequence belongs to the binding-protein-dependent transport system permease family. FecCD subfamily. The complex is composed of two ATP-binding proteins (BtuD), two transmembrane proteins (BtuC) and a solute-binding protein (BtuF).

It localises to the cell inner membrane. Part of the ABC transporter complex BtuCDF involved in vitamin B12 import. Involved in the translocation of the substrate across the membrane. In Vibrio vulnificus (strain CMCP6), this protein is Vitamin B12 import system permease protein BtuC.